Reading from the N-terminus, the 302-residue chain is uncharacterized protein (302 aa).

An N-terminal signal peptide occupies residues 1 to 52; it reads MLKKLKVVRLLVNHLIYCPSIFMPYSKNMKKKIWNKTSLGALFMLFGTALTA.

This sequence belongs to the MG439/MG440 family.

This is an uncharacterized protein from Mycoplasma pneumoniae (strain ATCC 29342 / M129 / Subtype 1) (Mycoplasmoides pneumoniae).